The chain runs to 266 residues: Hydroxyacylglutathione hydrolase (266 aa).

Zn(2+)-binding residues include His53, His55, Asp57, His58, His118, Asp140, and His178.

The protein belongs to the metallo-beta-lactamase superfamily. Glyoxalase II family. As to quaternary structure, monomer. It depends on Zn(2+) as a cofactor.

It catalyses the reaction an S-(2-hydroxyacyl)glutathione + H2O = a 2-hydroxy carboxylate + glutathione + H(+). It functions in the pathway secondary metabolite metabolism; methylglyoxal degradation; (R)-lactate from methylglyoxal: step 2/2. Its function is as follows. Thiolesterase that catalyzes the hydrolysis of S-D-lactoyl-glutathione to form glutathione and D-lactic acid. The protein is Hydroxyacylglutathione hydrolase of Cupriavidus taiwanensis (strain DSM 17343 / BCRC 17206 / CCUG 44338 / CIP 107171 / LMG 19424 / R1) (Ralstonia taiwanensis (strain LMG 19424)).